The primary structure comprises 179 residues: Ribosome maturation factor RimM (179 aa).

The PRC barrel domain maps to Lys-96–Ile-175.

The protein belongs to the RimM family. As to quaternary structure, binds ribosomal protein uS19.

The protein resides in the cytoplasm. An accessory protein needed during the final step in the assembly of 30S ribosomal subunit, possibly for assembly of the head region. Essential for efficient processing of 16S rRNA. May be needed both before and after RbfA during the maturation of 16S rRNA. It has affinity for free ribosomal 30S subunits but not for 70S ribosomes. The polypeptide is Ribosome maturation factor RimM (Sulfurimonas denitrificans (strain ATCC 33889 / DSM 1251) (Thiomicrospira denitrificans (strain ATCC 33889 / DSM 1251))).